Here is a 366-residue protein sequence, read N- to C-terminus: DNA integrity scanning protein DisA (366 aa).

Positions Val21 to Pro159 constitute a DAC domain. ATP is bound by residues Gly88, Leu106, and Thr119–Ser123.

The protein belongs to the DisA family. Homooctamer. Mg(2+) serves as cofactor.

The catalysed reaction is 2 ATP = 3',3'-c-di-AMP + 2 diphosphate. In terms of biological role, participates in a DNA-damage check-point. DisA forms globular foci that rapidly scan along the chromosomes searching for lesions. Its function is as follows. Also has diadenylate cyclase activity, catalyzing the condensation of 2 ATP molecules into cyclic di-AMP (c-di-AMP). c-di-AMP likely acts as a signaling molecule that may couple DNA integrity with a cellular process. The chain is DNA integrity scanning protein DisA from Corynebacterium glutamicum (strain ATCC 13032 / DSM 20300 / JCM 1318 / BCRC 11384 / CCUG 27702 / LMG 3730 / NBRC 12168 / NCIMB 10025 / NRRL B-2784 / 534).